The chain runs to 140 residues: Large ribosomal subunit protein uL16 (140 aa).

Basic residues predominate over residues 1-16 (MLMPKRVKHRKQMKGR). The interval 1–20 (MLMPKRVKHRKQMKGRMKGD) is disordered.

The protein belongs to the universal ribosomal protein uL16 family. Part of the 50S ribosomal subunit.

Functionally, binds 23S rRNA and is also seen to make contacts with the A and possibly P site tRNAs. The protein is Large ribosomal subunit protein uL16 of Geobacter sulfurreducens (strain ATCC 51573 / DSM 12127 / PCA).